The chain runs to 250 residues: UPF0193 protein EVG1 homolog (250 aa).

Positions 86–110 (ESLRNGEPLPLPEPPRPNTNNDPDK) are disordered.

Belongs to the UPF0193 (EVG1) family.

This is UPF0193 protein EVG1 homolog from Drosophila melanogaster (Fruit fly).